A 693-amino-acid chain; its full sequence is Serine/threonine-protein kinase Pkn1 (693 aa).

Positions 59-328 (FRLVRRLGRG…QVALAEHVRV (270 aa)) constitute a Protein kinase domain. Residues 65–73 (LGRGGMGAV) and Lys88 contribute to the ATP site. Residue Asp180 is the Proton acceptor of the active site. The PilZ domain occupies 393 to 491 (LVEVPVQVVL…LKAAVDALLQ (99 aa)). A TPR repeat occupies 630–663 (ARSHFQSGGALERDGQLSQALDQYERGLKLAPLE).

This sequence belongs to the protein kinase superfamily. Ser/Thr protein kinase family. In terms of processing, autophosphorylated.

It carries out the reaction L-seryl-[protein] + ATP = O-phospho-L-seryl-[protein] + ADP + H(+). It catalyses the reaction L-threonyl-[protein] + ATP = O-phospho-L-threonyl-[protein] + ADP + H(+). With respect to regulation, may be regulated by calcium or a calmodulin-like protein. Plays an essential role in proper timing of early development events. The sequence is that of Serine/threonine-protein kinase Pkn1 (pkn1) from Myxococcus xanthus.